Reading from the N-terminus, the 423-residue chain is F-box/LRR-repeat protein 2 (423 aa).

The F-box domain occupies 9–55 (GRINKKLPKELLLRIFSFLDIVTLCRCAQISKAWNILALDGSNWQRI). LRR repeat units lie at residues 61–87 (QTDV…SLRG), 88–113 (CIGV…NLNG), 114–139 (CTKI…DLTS), 140–165 (CVSI…NLSW), 166–191 (CDQI…LLRG), 192–217 (CTQL…NLQS), 218–243 (CSRI…CLSG), 244–269 (CSNL…EAAR), 270–295 (CSHL…DLEE), 296–321 (CILI…SLSH), 322–350 (CELI…ELDN), 351–375 (CLLI…ELYD), and 376–401 (CQQV…AYFA). Residues 80–90 (LRKLSLRGCIG) are interaction with Calmodulin. Residue Lys-201 forms a Glycyl lysine isopeptide (Lys-Gly) (interchain with G-Cter in ubiquitin) linkage. Position 404 is a phosphothreonine (Thr-404). Cys-420 carries the S-geranylgeranyl cysteine lipid modification. The CAAX motif motif lies at 420–423 (CVIL).

As to quaternary structure, part of the SCF (SKP1-CUL1-F-box) E3 ubiquitin-protein ligase complex SCF(FBXL2) composed of CUL1, SKP1, RBX1 and FBXL2. Interacts with calmodulin; may antagonize substrate ubiquitination by SCF(FBXL2). May interact with PIK3R1. Interacts with PTPN13. In terms of processing, phosphorylated by GSK-beta (GSK3B), promoting recognition by FBXO3, leading to its ubiquitination by the SCF(FBXO3) complex. Ubiquitinated at Lys-201 by the SCF(FBXO3) complex in response to lipopolysaccharide (LPS), leading to its degradation by the proteasome.

The protein resides in the membrane. It participates in protein modification; protein ubiquitination. In terms of biological role, calcium-activated substrate recognition component of the SCF (SKP1-cullin-F-box protein) E3 ubiquitin-protein ligase complex, SCF(FBXL2), which mediates the ubiquitination and subsequent proteasomal degradation of target proteins. Unlike many F-box proteins, FBXL2 does not seem to target phosphodegron within its substrates but rather calmodulin-binding motifs and is thereby antagonized by calmodulin. This is the case for the cyclins CCND2 and CCND3 which polyubiquitination and subsequent degradation are inhibited by calmodulin. Through CCND2 and CCND3 degradation induces cell-cycle arrest in G(0). SCF(FBXL2) also mediates PIK3R2 ubiquitination and proteasomal degradation thereby regulating phosphatidylinositol 3-kinase signaling and autophagy. PCYT1A monoubiquitination by SCF(FBXL2) and subsequent degradation regulates synthesis of phosphatidylcholine, which is utilized for formation of membranes and of pulmonary surfactant. The SCF(FBXL2) complex acts as a regulator of inflammation by mediating ubiquitination and degradation of TRAF proteins (TRAF1, TRAF2, TRAF3, TRAF4, TRAF5 and TRAF6). The SCF(FBXL2) complex acts as a negative regulator of the NLRP3 inflammasome by mediating ubiquitination and degradation of NLRP3. This is F-box/LRR-repeat protein 2 from Pongo abelii (Sumatran orangutan).